A 617-amino-acid polypeptide reads, in one-letter code: Elongation factor 4 (617 aa).

The tr-type G domain occupies 17–203; the sequence is ERIRNFCIIA…RVCELVPHPV (187 aa). Residues 29–34 and 150–153 contribute to the GTP site; these read DHGKST and NKID.

It belongs to the TRAFAC class translation factor GTPase superfamily. Classic translation factor GTPase family. LepA subfamily.

Its subcellular location is the cell membrane. It catalyses the reaction GTP + H2O = GDP + phosphate + H(+). Its function is as follows. Required for accurate and efficient protein synthesis under certain stress conditions. May act as a fidelity factor of the translation reaction, by catalyzing a one-codon backward translocation of tRNAs on improperly translocated ribosomes. Back-translocation proceeds from a post-translocation (POST) complex to a pre-translocation (PRE) complex, thus giving elongation factor G a second chance to translocate the tRNAs correctly. Binds to ribosomes in a GTP-dependent manner. The protein is Elongation factor 4 of Corynebacterium urealyticum (strain ATCC 43042 / DSM 7109).